Here is a 476-residue protein sequence, read N- to C-terminus: Inosine-5'-monophosphate dehydrogenase (476 aa).

CBS domains follow at residues 93-151 and 152-211; these read IIRD…VKDI and MTKD…TRDE. Residues D242 and 292–294 contribute to the NAD(+) site; that span reads GIG. K(+) is bound by residues G294 and G296. S297 is an IMP binding site. A K(+)-binding site is contributed by C299. C299 functions as the Thioimidate intermediate in the catalytic mechanism. Residues 334 to 336, 357 to 358, and 381 to 385 each bind IMP; these read DGG, GY, and YRGMG. R398 (proton acceptor) is an active-site residue. An IMP-binding site is contributed by E408. E462 provides a ligand contact to K(+).

It belongs to the IMPDH/GMPR family. Homotetramer. K(+) is required as a cofactor.

The enzyme catalyses IMP + NAD(+) + H2O = XMP + NADH + H(+). It participates in purine metabolism; XMP biosynthesis via de novo pathway; XMP from IMP: step 1/1. Mycophenolic acid (MPA) is a non-competitive inhibitor that prevents formation of the closed enzyme conformation by binding to the same site as the amobile flap. In contrast, mizoribine monophosphate (MZP) is a competitive inhibitor that induces the closed conformation. MPA is a potent inhibitor of mammalian IMPDHs but a poor inhibitor of the bacterial enzymes. MZP is a more potent inhibitor of bacterial IMPDH. Functionally, catalyzes the conversion of inosine 5'-phosphate (IMP) to xanthosine 5'-phosphate (XMP), the first committed and rate-limiting step in the de novo synthesis of guanine nucleotides, and therefore plays an important role in the regulation of cell growth. This chain is Inosine-5'-monophosphate dehydrogenase, found in Korarchaeum cryptofilum (strain OPF8).